The following is a 238-amino-acid chain: Ribonuclease HII (238 aa).

One can recognise an RNase H type-2 domain in the interval 23 to 215 (QRLCGVDEAG…VREALARLPM (193 aa)). Residues Asp-29, Glu-30, and Asp-124 each coordinate a divalent metal cation.

It belongs to the RNase HII family. Mn(2+) is required as a cofactor. Requires Mg(2+) as cofactor.

Its subcellular location is the cytoplasm. It catalyses the reaction Endonucleolytic cleavage to 5'-phosphomonoester.. Endonuclease that specifically degrades the RNA of RNA-DNA hybrids. This chain is Ribonuclease HII, found in Cupriavidus necator (strain ATCC 17699 / DSM 428 / KCTC 22496 / NCIMB 10442 / H16 / Stanier 337) (Ralstonia eutropha).